We begin with the raw amino-acid sequence, 397 residues long: Decapping and exoribonuclease protein (397 aa).

Positions 1–10 (MEPRGTKRKA) are enriched in basic residues. Residues 1–30 (MEPRGTKRKAEKTEVEKPLNKLPRAVPSLR) are disordered. Substrate-binding positions include Arg-58, Glu-101, and 131–133 (WRG). Residue Met-185 coordinates adenosine 3',5'-bisphosphate. Residue Glu-192 participates in Mg(2+) binding. Cys-217 and Glu-234 together coordinate substrate. Positions 234, 236, 253, and 254 each coordinate Mg(2+). Residue Asp-236 coordinates adenosine 3',5'-bisphosphate. Positions 253-256 (ELKT) are adenosine 3',5'-bisphosphate; inhibitor. Substrate contacts are provided by Lys-255 and Gln-280. Gln-280 is an adenosine 3',5'-bisphosphate binding site. At Thr-392 the chain carries Phosphothreonine. Position 394 is a phosphoserine (Ser-394).

It belongs to the DXO/Dom3Z family. The cofactor is Mg(2+).

Its subcellular location is the nucleus. It catalyses the reaction a 5'-end triphospho-ribonucleoside in mRNA + H2O = a 5'-end phospho-ribonucleoside in mRNA + diphosphate + H(+). The catalysed reaction is a 5'-end NAD(+)-phospho-ribonucleoside in mRNA + H2O = a 5'-end phospho-ribonucleoside in mRNA + NAD(+) + H(+). It carries out the reaction a 5'-end NAD(+)-phospho-ribonucleoside in snoRNA + H2O = a 5'-end phospho-ribonucleoside in snoRNA + NAD(+) + H(+). The enzyme catalyses a 5'-end (N(7)-methyl 5'-triphosphoguanosine)-ribonucleoside-ribonucleotide in mRNA + H2O = a (N(7)-methyl 5'-triphosphoguanosine)-nucleoside + a 5'-end phospho-ribonucleoside in mRNA + H(+). It catalyses the reaction a 5'-end FAD-phospho-ribonucleoside in mRNA + H2O = a 5'-end phospho-ribonucleoside in mRNA + FAD + H(+). The catalysed reaction is a 5'-end CoA-ribonucleoside in mRNA + H2O = 3'-dephospho-CoA + a 5'-end phospho-ribonucleoside in mRNA + H(+). With respect to regulation, the 5'-3' exoribonuclease activity is inhibited by adenosine 3',5'-bisphosphate. In terms of biological role, decapping enzyme for NAD-capped RNAs: specifically hydrolyzes the nicotinamide adenine dinucleotide (NAD) cap from a subset of RNAs by removing the entire NAD moiety from the 5'-end of an NAD-capped RNA. The NAD-cap is present at the 5'-end of some RNAs and snoRNAs. In contrast to the canonical 5'-end N7 methylguanosine (m7G) cap, the NAD cap promotes mRNA decay. Preferentially acts on NAD-capped transcripts in response to environmental stress. Also acts as a non-canonical decapping enzyme that removes the entire cap structure of m7G capped or incompletely capped RNAs and mediates their subsequent degradation. Specifically degrades pre-mRNAs with a defective 5'-end m7G cap and is part of a pre-mRNA capping quality control. Has decapping activity toward incomplete 5'-end m7G cap mRNAs such as unmethylated 5'-end-capped RNA (cap0), while it has no activity toward 2'-O-ribose methylated m7G cap (cap1). In contrast to canonical decapping enzymes DCP2 and NUDT16, which cleave the cap within the triphosphate linkage, the decapping activity releases the entire cap structure GpppN and a 5'-end monophosphate RNA. Also has 5'-3' exoribonuclease activities: The 5'-end monophosphate RNA is then degraded by the 5'-3' exoribonuclease activity, enabling this enzyme to decap and degrade incompletely capped mRNAs. Also possesses RNA 5'-pyrophosphohydrolase activity by hydrolyzing the 5'-end triphosphate to release pyrophosphates. Exhibits decapping activity towards FAD-capped RNAs. Exhibits decapping activity towards dpCoA-capped RNAs in vitro. The sequence is that of Decapping and exoribonuclease protein from Mus musculus (Mouse).